We begin with the raw amino-acid sequence, 437 residues long: tRNA modification GTPase MnmE (437 aa).

Residues arginine 21, glutamate 80, and arginine 120 each contribute to the (6S)-5-formyl-5,6,7,8-tetrahydrofolate site. One can recognise a TrmE-type G domain in the interval 218-361 (GFVVVLAGPP…LLDRVAAAAG (144 aa)). Residue asparagine 228 participates in K(+) binding. Residues 228-233 (NAGKST), 247-253 (SPIPGTT), and 272-275 (DTAG) each bind GTP. Serine 232 contributes to the Mg(2+) binding site. Residues serine 247, isoleucine 249, and threonine 252 each contribute to the K(+) site. Threonine 253 is a Mg(2+) binding site. Lysine 437 serves as a coordination point for (6S)-5-formyl-5,6,7,8-tetrahydrofolate.

It belongs to the TRAFAC class TrmE-Era-EngA-EngB-Septin-like GTPase superfamily. TrmE GTPase family. As to quaternary structure, homodimer. Heterotetramer of two MnmE and two MnmG subunits. K(+) is required as a cofactor.

It is found in the cytoplasm. Its function is as follows. Exhibits a very high intrinsic GTPase hydrolysis rate. Involved in the addition of a carboxymethylaminomethyl (cmnm) group at the wobble position (U34) of certain tRNAs, forming tRNA-cmnm(5)s(2)U34. This is tRNA modification GTPase MnmE from Methylobacterium sp. (strain 4-46).